A 143-amino-acid chain; its full sequence is Granulocyte-macrophage colony-stimulating factor (143 aa).

The signal sequence occupies residues 1–17; that stretch reads MWLQNLLLLGTVVCSFS. Thr27 carries O-linked (GalNAc...) threonine glycosylation. 2 N-linked (GlcNAc...) asparagine glycosylation sites follow: Asn44 and Asn54. 2 disulfides stabilise this stretch: Cys70-Cys112 and Cys104-Cys137.

It belongs to the GM-CSF family. Monomer. The signaling GM-CSF receptor complex is a dodecamer of two head-to-head hexamers of two alpha, two beta, and two ligand subunits.

It is found in the secreted. Cytokine that stimulates the growth and differentiation of hematopoietic precursor cells from various lineages, including granulocytes, macrophages, eosinophils and erythrocytes. The polypeptide is Granulocyte-macrophage colony-stimulating factor (CSF2) (Bos taurus (Bovine)).